The chain runs to 41 residues: Pathogenesis-related protein (41 aa).

This sequence belongs to the CRISP family.

In terms of biological role, probably involved in the defense reaction of plants against pathogens. In Cucumis melo (Muskmelon), this protein is Pathogenesis-related protein.